The primary structure comprises 35 residues: MSDIN-like toxin proprotein 6 (35 aa).

Residues 1-10 constitute a propeptide that is removed on maturation; sequence MSDINTTRLP. A cross-link (cyclopeptide (Phe-Pro)) is located at residues 11–18; that stretch reads FVFVASPP. Positions 19-35 are excised as a propeptide; the sequence is CVGDDIAMVLTRGENLC.

This sequence belongs to the MSDIN fungal toxin family. Post-translationally, processed by the macrocyclase-peptidase enzyme POPB to yield a toxic cyclic octapeptide. POPB first removes 10 residues from the N-terminus. Conformational trapping of the remaining peptide forces the enzyme to release this intermediate rather than proceed to macrocyclization. The enzyme rebinds the remaining peptide in a different conformation and catalyzes macrocyclization of the N-terminal 8 residues. In terms of tissue distribution, expressed in basidiocarps.

In terms of biological role, probable toxin that belongs to the MSDIN-like toxin family responsible for a large number of food poisoning cases and deaths. This Amanita exitialis (Guangzhou destroying angel) protein is MSDIN-like toxin proprotein 6.